Here is a 394-residue protein sequence, read N- to C-terminus: THAP domain-containing protein 5 (394 aa).

Residues 1-84 form a THAP-type zinc finger; the sequence is MPRYCAAICC…LKQTAIPTIF (84 aa). Positions 86–109 are disordered; it reads LPEDNQEKDPSKKKSQKKKLKSEK. The HCFC1-binding motif (HBM) signature appears at 320 to 323; that stretch reads EHSY. Residues 347-381 are a coiled coil; the sequence is LELQEQQTLGRLKSLEALIRQLKQENWLSEENVKI.

As to quaternary structure, interacts with HTRA2; under apoptotic conditions. Interacts with ABRAXAS2. Cleaved by HTRA2 during apoptosis.

The protein resides in the nucleus. Has sequence-specific DNA-binding activity and can function as transcriptional repressor (in vitro). May be a regulator of cell cycle: THAP5 overexpression in human cell lines causes cell cycle arrest at G2/M phase. The protein is THAP domain-containing protein 5 (THAP5) of Bos taurus (Bovine).